We begin with the raw amino-acid sequence, 123 residues long: Large ribosomal subunit protein uL18 (123 aa).

This sequence belongs to the universal ribosomal protein uL18 family. Part of the 50S ribosomal subunit; part of the 5S rRNA/L5/L18/L25 subcomplex. Contacts the 5S and 23S rRNAs.

In terms of biological role, this is one of the proteins that bind and probably mediate the attachment of the 5S RNA into the large ribosomal subunit, where it forms part of the central protuberance. In Chlamydia abortus (strain DSM 27085 / S26/3) (Chlamydophila abortus), this protein is Large ribosomal subunit protein uL18.